The primary structure comprises 310 residues: Beta-1,3-galactosyltransferase 5 (310 aa).

Topologically, residues 1–7 (MAFPKMR) are cytoplasmic. The chain crosses the membrane as a helical; Signal-anchor for type II membrane protein span at residues 8–28 (LMYICLLVLGALCLYFSMYSL). The Lumenal portion of the chain corresponds to 29 to 310 (NPFKEQSFVY…NSRGEDCPPV (282 aa)). N-linked (GlcNAc...) asparagine glycosylation is found at N130, N174, and N231.

This sequence belongs to the glycosyltransferase 31 family. In terms of tissue distribution, expressed in stomach, jejunum, colon, pancreas, small intestine, testis and gastrointestinal and pancreatic cancer cell lines. Hardly detected in lung, liver, adrenal gland and peripheral blood leukocytes.

The protein resides in the golgi apparatus membrane. The catalysed reaction is a globoside Gb4Cer (d18:1(4E)) + UDP-alpha-D-galactose = a globoside GalGb4Cer (d18:1(4E)) + UDP + H(+). The protein operates within protein modification; protein glycosylation. Its function is as follows. Catalyzes the transfer of Gal to GlcNAc-based acceptors with a preference for the core3 O-linked glycan GlcNAc(beta1,3)GalNAc structure. Can use glycolipid LC3Cer as an efficient acceptor. This Homo sapiens (Human) protein is Beta-1,3-galactosyltransferase 5.